A 46-amino-acid chain; its full sequence is uncharacterized protein (46 aa).

This is an uncharacterized protein from Escherichia coli (Bacteriophage T4).